Here is a 150-residue protein sequence, read N- to C-terminus: Monothiol glutaredoxin-S13 (150 aa).

A disordered region spans residues P30–N52. Residues S31 to S44 are compositionally biased toward low complexity. In terms of domain architecture, Glutaredoxin spans K53–W149. Residue C73 coordinates [2Fe-2S] cluster. The Responsive for interaction with TGA factors signature appears at A147–L150.

This sequence belongs to the glutaredoxin family. CC-type subfamily.

The protein resides in the cytoplasm. It is found in the nucleus. In terms of biological role, may only reduce GSH-thiol disulfides, but not protein disulfides. The protein is Monothiol glutaredoxin-S13 (GRXS13) of Arabidopsis thaliana (Mouse-ear cress).